We begin with the raw amino-acid sequence, 61 residues long: MAELQERIRHFWKESRRAFLVTKKPNWATYKRAAKITGLGIILIGLIGMLIRIVGILILGG.

The Cytoplasmic portion of the chain corresponds to 1–34; that stretch reads MAELQERIRHFWKESRRAFLVTKKPNWATYKRAA. A helical membrane pass occupies residues 35-55; that stretch reads KITGLGIILIGLIGMLIRIVG. Topologically, residues 56–61 are extracellular; the sequence is ILILGG.

The protein belongs to the SecE/SEC61-gamma family. As to quaternary structure, component of the Sec protein translocase complex. Heterotrimer consisting of alpha (SecY), beta (SecG) and gamma (SecE) subunits. The heterotrimers can form oligomers, although 1 heterotrimer is thought to be able to translocate proteins. Interacts with the ribosome. May interact with SecDF, and other proteins may be involved.

Its subcellular location is the cell membrane. Its function is as follows. Essential subunit of the protein translocation channel SecYEG. Clamps together the 2 halves of SecY. May contact the channel plug during translocation. In Pyrococcus furiosus (strain ATCC 43587 / DSM 3638 / JCM 8422 / Vc1), this protein is Protein translocase subunit SecE.